The following is a 198-amino-acid chain: Transcriptional regulator GfcR (198 aa).

The protein belongs to the purine/pyrimidine phosphoribosyltransferase family. GfcR subfamily.

This Methanospirillum hungatei JF-1 (strain ATCC 27890 / DSM 864 / NBRC 100397 / JF-1) protein is Transcriptional regulator GfcR.